An 803-amino-acid chain; its full sequence is Dynein axonemal intermediate chain 4 (803 aa).

Polar residues predominate over residues 1 to 33 (MPSSPTSTRKQTNFTASVSAQSRKSISFGNPKS). Disordered regions lie at residues 1 to 41 (MPSS…GYAG), 88 to 109 (LYHP…SQEG), and 143 to 163 (STVS…LEDP). Over residues 143-155 (STVSKSSISTTES) the composition is skewed to low complexity. 6 WD repeats span residues 492-532 (QSPY…NTPV), 541-589 (KHLG…DCHD), 616-656 (SRQA…QYLE), 660-700 (GHKG…PFFT), 703-742 (PTTY…LDPL), and 748-787 (NPGI…TPTE).

In terms of assembly, part of the multisubunit axonemal dynein complex formed at least of two heavy chains and a number of intermediate and light chains. Associated with axonemal dynein subunits such as, DNAH2, DNAI3, and DYNLT1. Interacts with DYNLT1.

The protein localises to the cytoplasm. The protein resides in the cytoskeleton. Its subcellular location is the flagellum axoneme. It is found in the cilium axoneme. It localises to the dynein axonemal particle. Its function is as follows. Plays a critical role in the assembly of axonemal dynein complex, thereby playing a role in ciliary motility. The polypeptide is Dynein axonemal intermediate chain 4 (Rattus norvegicus (Rat)).